Here is a 485-residue protein sequence, read N- to C-terminus: Glycogen synthase (485 aa).

ADP-alpha-D-glucose is bound at residue Lys21.

This sequence belongs to the glycosyltransferase 1 family. Bacterial/plant glycogen synthase subfamily.

It carries out the reaction [(1-&gt;4)-alpha-D-glucosyl](n) + ADP-alpha-D-glucose = [(1-&gt;4)-alpha-D-glucosyl](n+1) + ADP + H(+). Its pathway is glycan biosynthesis; glycogen biosynthesis. Functionally, synthesizes alpha-1,4-glucan chains using ADP-glucose. This is Glycogen synthase from Pseudomonas syringae pv. syringae (strain B728a).